A 283-amino-acid polypeptide reads, in one-letter code: NFU1 iron-sulfur cluster scaffold homolog, mitochondrial (283 aa).

Residues 1–30 constitute a mitochondrion transit peptide; that stretch reads MSKFLSQAALNTLRNTRLGSRQLVRSFAGI. The tract at residues 182 to 250 is nifU; sequence IKELLDTRIR…IPEVESVEQV (69 aa). [4Fe-4S] cluster-binding residues include Cys219 and Cys222.

It belongs to the NifU family.

It localises to the mitochondrion. Molecular scaffold for [Fe-S] cluster assembly of mitochondrial iron-sulfur proteins. The polypeptide is NFU1 iron-sulfur cluster scaffold homolog, mitochondrial (Drosophila yakuba (Fruit fly)).